Consider the following 201-residue polypeptide: UPF0301 protein Atu0781 (201 aa).

The protein belongs to the UPF0301 (AlgH) family.

This chain is UPF0301 protein Atu0781, found in Agrobacterium fabrum (strain C58 / ATCC 33970) (Agrobacterium tumefaciens (strain C58)).